A 120-amino-acid chain; its full sequence is SAGA-associated factor 11 (120 aa).

Low complexity predominate over residues serine 40–asparagine 60. The tract at residues serine 40 to serine 82 is disordered. The segment at phenylalanine 93 to cysteine 114 adopts an SGF11-type zinc-finger fold.

The protein belongs to the SGF11 family. As to quaternary structure, component of the 1.8 MDa SAGA transcription coactivator-HAT complex. SAGA is built of 5 distinct domains with specialized functions. Within the SAGA complex, SUS1, SGF11, SGF73 and UBP8 form an additional subcomplex of SAGA called the DUB module (deubiquitination module). Interacts directly with SGF73, SUS1 and UBP8.

Its subcellular location is the nucleus. Functions as a component of the transcription regulatory histone acetylation (HAT) complex SAGA. At the promoters, SAGA is required for recruitment of the basal transcription machinery. It influences RNA polymerase II transcriptional activity through different activities such as TBP interaction and promoter selectivity, interaction with transcription activators, and chromatin modification through histone acetylation and deubiquitination. SAGA acetylates nucleosomal histone H3 to some extent (to form H3K9ac, H3K14ac, H3K18ac and H3K23ac). SAGA interacts with DNA via upstream activating sequences (UASs). Involved in transcriptional regulation of a subset of SAGA-regulated genes. Within the SAGA complex, participates in a subcomplex, that specifically deubiquitinates histones H2B. This chain is SAGA-associated factor 11, found in Candida albicans (strain SC5314 / ATCC MYA-2876) (Yeast).